The following is a 181-amino-acid chain: Inner membrane-spanning protein YciB (181 aa).

A run of 5 helical transmembrane segments spans residues Phe8–Ala28, Ile53–Phe73, Trp76–Gly96, Leu121–Phe141, and Phe149–Ile169.

It belongs to the YciB family.

The protein resides in the cell inner membrane. Plays a role in cell envelope biogenesis, maintenance of cell envelope integrity and membrane homeostasis. The sequence is that of Inner membrane-spanning protein YciB from Coxiella burnetii (strain RSA 331 / Henzerling II).